Reading from the N-terminus, the 154-residue chain is 17 kDa surface antigen (154 aa).

Residues Met-1–Ala-19 form the signal peptide. Cys-20 carries N-palmitoyl cysteine lipidation. The S-diacylglycerol cysteine moiety is linked to residue Cys-20.

Belongs to the rickettsiale 17 kDa surface antigen family.

Its subcellular location is the cell outer membrane. This is 17 kDa surface antigen (omp) from Rickettsia australis.